A 652-amino-acid polypeptide reads, in one-letter code: DNA ligase (652 aa).

NAD(+) contacts are provided by residues 29 to 33, 78 to 79, and Glu-107; these read DSEYD and SL. Residue Lys-109 is the N6-AMP-lysine intermediate of the active site. Arg-130, Glu-164, Lys-278, and Lys-302 together coordinate NAD(+). Cys-395, Cys-398, Cys-413, and Cys-418 together coordinate Zn(2+). The 76-residue stretch at 577-652 folds into the BRCT domain; sequence VADAALSGLT…VRDEAWLESL (76 aa).

This sequence belongs to the NAD-dependent DNA ligase family. LigA subfamily. It depends on Mg(2+) as a cofactor. Requires Mn(2+) as cofactor.

The enzyme catalyses NAD(+) + (deoxyribonucleotide)n-3'-hydroxyl + 5'-phospho-(deoxyribonucleotide)m = (deoxyribonucleotide)n+m + AMP + beta-nicotinamide D-nucleotide.. DNA ligase that catalyzes the formation of phosphodiester linkages between 5'-phosphoryl and 3'-hydroxyl groups in double-stranded DNA using NAD as a coenzyme and as the energy source for the reaction. It is essential for DNA replication and repair of damaged DNA. This Streptococcus pneumoniae serotype 2 (strain D39 / NCTC 7466) protein is DNA ligase.